Reading from the N-terminus, the 83-residue chain is Small ribosomal subunit protein bS18 (83 aa).

It belongs to the bacterial ribosomal protein bS18 family. In terms of assembly, part of the 30S ribosomal subunit. Forms a tight heterodimer with protein bS6.

In terms of biological role, binds as a heterodimer with protein bS6 to the central domain of the 16S rRNA, where it helps stabilize the platform of the 30S subunit. This chain is Small ribosomal subunit protein bS18, found in Methylobacterium sp. (strain 4-46).